The following is a 793-amino-acid chain: Copalyl diphosphate synthase CPS1, chloroplastic (793 aa).

Residues 1–59 (MASLSSTILSRSPAARRRITPASAKLHRPECFATSAWMGSSSKNLSLSYQLNHKKISVA) constitute a chloroplast transit peptide. Residue Lys238 coordinates substrate. Asp370 and Asp372 together coordinate Mg(2+). Positions 370–373 (DIDD) match the DXDD motif motif. Residue Lys457 coordinates substrate.

Belongs to the terpene synthase family. Mg(2+) is required as a cofactor.

The protein localises to the plastid. The protein resides in the chloroplast. The catalysed reaction is (2E,6E,10E)-geranylgeranyl diphosphate = (+)-copalyl diphosphate. It participates in secondary metabolite biosynthesis; terpenoid biosynthesis. In terms of biological role, involved in tanshinone biosynthesis in hairy roots. Catalyzes the conversion of geranylgeranyl diphosphate (GGPP) to copalyl diphosphate (CPP). In Salvia miltiorrhiza (Chinese sage), this protein is Copalyl diphosphate synthase CPS1, chloroplastic.